The primary structure comprises 229 residues: 2-C-methyl-D-erythritol 4-phosphate cytidylyltransferase (229 aa).

This sequence belongs to the IspD/TarI cytidylyltransferase family. IspD subfamily.

It catalyses the reaction 2-C-methyl-D-erythritol 4-phosphate + CTP + H(+) = 4-CDP-2-C-methyl-D-erythritol + diphosphate. It functions in the pathway isoprenoid biosynthesis; isopentenyl diphosphate biosynthesis via DXP pathway; isopentenyl diphosphate from 1-deoxy-D-xylulose 5-phosphate: step 2/6. Catalyzes the formation of 4-diphosphocytidyl-2-C-methyl-D-erythritol from CTP and 2-C-methyl-D-erythritol 4-phosphate (MEP). This chain is 2-C-methyl-D-erythritol 4-phosphate cytidylyltransferase, found in Neisseria meningitidis serogroup A / serotype 4A (strain DSM 15465 / Z2491).